The following is a 485-amino-acid chain: Acetyl-coenzyme A carboxylase carboxyl transferase subunit beta, chloroplastic (485 aa).

Residues 218–485 (LWIQCDNCYA…FFPLNKNEIK (268 aa)) enclose the CoA carboxyltransferase N-terminal domain. Zn(2+) is bound by residues Cys222, Cys225, Cys241, and Cys244. A C4-type zinc finger spans residues 222 to 244 (CDNCYALIYKKALKFKMNVCEQC).

The protein belongs to the AccD/PCCB family. As to quaternary structure, acetyl-CoA carboxylase is a heterohexamer composed of biotin carboxyl carrier protein, biotin carboxylase and 2 subunits each of ACCase subunit alpha and ACCase plastid-coded subunit beta (accD). The cofactor is Zn(2+).

It is found in the plastid. The protein localises to the chloroplast stroma. The catalysed reaction is N(6)-carboxybiotinyl-L-lysyl-[protein] + acetyl-CoA = N(6)-biotinyl-L-lysyl-[protein] + malonyl-CoA. It participates in lipid metabolism; malonyl-CoA biosynthesis; malonyl-CoA from acetyl-CoA: step 1/1. Component of the acetyl coenzyme A carboxylase (ACC) complex. Biotin carboxylase (BC) catalyzes the carboxylation of biotin on its carrier protein (BCCP) and then the CO(2) group is transferred by the transcarboxylase to acetyl-CoA to form malonyl-CoA. In Aethionema cordifolium (Lebanon stonecress), this protein is Acetyl-coenzyme A carboxylase carboxyl transferase subunit beta, chloroplastic.